A 422-amino-acid chain; its full sequence is Vitamin D3 receptor (422 aa).

Residues 21-96 (PRICGVCGDR…IGMMKEFILT (76 aa)) constitute a DNA-binding region (nuclear receptor). Zn(2+)-binding residues include cysteine 24, cysteine 27, cysteine 41, cysteine 44, cysteine 60, cysteine 66, cysteine 76, and cysteine 79. 2 NR C4-type zinc fingers span residues 24 to 44 (CGVC…CEGC) and 60 to 84 (CPFN…LKRC). Positions 97–126 (DEEVQRKREMIMKRKEEEALKDSLRPKLSE) are hinge. Residues 127 to 418 (EQQHIIAILL…LTPLVLEVFG (292 aa)) enclose the NR LBD domain. Position 143 (tyrosine 143) interacts with calcitriol. A disordered region spans residues 161-185 (VSTGSYSPRPTLSFSGDSSSNSDLY). A compositionally biased stretch (polar residues) spans 162–172 (STGSYSPRPTL). The segment covering 173–182 (SFSGDSSSNS) has biased composition (low complexity). Serine 232 contacts calcitriol. Residues 241-259 (KMIPGFRDLTSDDQIVLLK) form an interaction with coactivator LXXLL motif region. The calcitriol site is built by arginine 269, serine 273, histidine 300, and histidine 392. The 9aaTAD signature appears at 411 to 419 (PLVLEVFGN).

It belongs to the nuclear hormone receptor family. NR1 subfamily. In terms of assembly, homodimer in the absence of bound vitamin D3. Heterodimer with RXRA after vitamin D3 binding. Interacts with MED1, NCOA1, NCOA2, NCOA3 and NCOA6 coactivators, leading to a strong increase of transcription of target genes. Interacts with the corepressor NCOR1. Interacts with SNW1. Interacts with IRX4, the interaction does not affect its transactivation activity. Interacts with CRY1. Interacts with CRY2 in a ligand-dependent manner. In terms of processing, ubiquitinated by UBR5, leading to its degradation: UBR5 specifically recognizes and binds ligand-bound VDR when it is not associated with coactivators (NCOAs). In presence of NCOAs, the UBR5-degron is not accessible, preventing its ubiquitination and degradation.

Its subcellular location is the nucleus. It is found in the cytoplasm. Nuclear receptor for calcitriol, the active form of vitamin D3 which mediates the action of this vitamin on cells. Enters the nucleus upon vitamin D3 binding where it forms heterodimers with the retinoid X receptor/RXR. The VDR-RXR heterodimers bind to specific response elements on DNA and activate the transcription of vitamin D3-responsive target genes. Plays a central role in calcium homeostasis. Also functions as a receptor for the secondary bile acid lithocholic acid (LCA) and its metabolites. The protein is Vitamin D3 receptor (Vdr) of Mus musculus (Mouse).